A 176-amino-acid polypeptide reads, in one-letter code: NAD(P)H-quinone oxidoreductase subunit 6, chloroplastic (176 aa).

5 helical membrane passes run 10 to 30, 33 to 53, 63 to 83, 105 to 125, and 152 to 172; these read FLLV…VLFT, IFSA…YILA, LLIY…FMSG, ISLF…GIIW, and FFLP…GAIA.

The protein belongs to the complex I subunit 6 family. As to quaternary structure, NDH is composed of at least 16 different subunits, 5 of which are encoded in the nucleus.

The protein resides in the plastid. It is found in the chloroplast thylakoid membrane. The enzyme catalyses a plastoquinone + NADH + (n+1) H(+)(in) = a plastoquinol + NAD(+) + n H(+)(out). It carries out the reaction a plastoquinone + NADPH + (n+1) H(+)(in) = a plastoquinol + NADP(+) + n H(+)(out). Its function is as follows. NDH shuttles electrons from NAD(P)H:plastoquinone, via FMN and iron-sulfur (Fe-S) centers, to quinones in the photosynthetic chain and possibly in a chloroplast respiratory chain. The immediate electron acceptor for the enzyme in this species is believed to be plastoquinone. Couples the redox reaction to proton translocation, and thus conserves the redox energy in a proton gradient. The polypeptide is NAD(P)H-quinone oxidoreductase subunit 6, chloroplastic (ndhG) (Spinacia oleracea (Spinach)).